The chain runs to 198 residues: Molybdenum cofactor guanylyltransferase (198 aa).

Residues 14–16 (LAG), K27, D73, and D103 each bind GTP. D103 provides a ligand contact to Mg(2+).

Belongs to the MobA family. In terms of assembly, monomer. Requires Mg(2+) as cofactor.

Its subcellular location is the cytoplasm. The catalysed reaction is Mo-molybdopterin + GTP + H(+) = Mo-molybdopterin guanine dinucleotide + diphosphate. Transfers a GMP moiety from GTP to Mo-molybdopterin (Mo-MPT) cofactor (Moco or molybdenum cofactor) to form Mo-molybdopterin guanine dinucleotide (Mo-MGD) cofactor. The chain is Molybdenum cofactor guanylyltransferase from Pseudomonas paraeruginosa (strain DSM 24068 / PA7) (Pseudomonas aeruginosa (strain PA7)).